The primary structure comprises 251 residues: Probable transcriptional regulatory protein Caul_0780 (251 aa).

It belongs to the TACO1 family.

The protein localises to the cytoplasm. The chain is Probable transcriptional regulatory protein Caul_0780 from Caulobacter sp. (strain K31).